A 303-amino-acid polypeptide reads, in one-letter code: Bifunctional protein FolD (303 aa).

Residues 169–171, threonine 196, and valine 237 contribute to the NADP(+) site; that span reads GRG.

The protein belongs to the tetrahydrofolate dehydrogenase/cyclohydrolase family. Homodimer.

It carries out the reaction (6R)-5,10-methylene-5,6,7,8-tetrahydrofolate + NADP(+) = (6R)-5,10-methenyltetrahydrofolate + NADPH. The catalysed reaction is (6R)-5,10-methenyltetrahydrofolate + H2O = (6R)-10-formyltetrahydrofolate + H(+). The protein operates within one-carbon metabolism; tetrahydrofolate interconversion. Catalyzes the oxidation of 5,10-methylenetetrahydrofolate to 5,10-methenyltetrahydrofolate and then the hydrolysis of 5,10-methenyltetrahydrofolate to 10-formyltetrahydrofolate. In Micrococcus luteus (strain ATCC 4698 / DSM 20030 / JCM 1464 / CCM 169 / CCUG 5858 / IAM 1056 / NBRC 3333 / NCIMB 9278 / NCTC 2665 / VKM Ac-2230) (Micrococcus lysodeikticus), this protein is Bifunctional protein FolD.